The sequence spans 271 residues: MVNLKELSQNEVLELINYVKSLRKQNFSYSQISKKIEIERNIKISKSTIIRWCKNSNNPFNKTKFIDLSPSPELSYIIGVYFGDANIYYRKKTGSYYFRIKVVDKDFVDVVKNSLIKIGLNPTISYVEEKTRSNRWHVEASSKSLYKFLSQNKEELFKVAEKYPEDFLRGFFDSEGYVTSNKIALENYDLELLEFSKELLKKLDVHSTIHIAKKKGTESNIRGEIYHYKDDFYRLSIHRKESVRNFAIKVSFSIKRKRERLQKLLESMDKH.

The DOD-type homing endonuclease domain maps to 77 to 205 (IIGVYFGDAN…SKELLKKLDV (129 aa)).

This is an uncharacterized protein from Methanocaldococcus jannaschii (strain ATCC 43067 / DSM 2661 / JAL-1 / JCM 10045 / NBRC 100440) (Methanococcus jannaschii).